The following is a 76-amino-acid chain: Envelope small membrane protein (76 aa).

Residues 1 to 14 (MLQLVNDNGLVVNV) lie on the Virion surface side of the membrane. A helical membrane pass occupies residues 15-35 (ILWLFVLFFLLIISITFVQLV). The Intravirion portion of the chain corresponds to 36-76 (NLCFTCHRLCNSAVYTPIGRLYRVYKSYMRIDPLPSTVIDV).

Belongs to the alphacoronaviruses E protein family. As to quaternary structure, homopentamer. Interacts with membrane protein M in the budding compartment of the host cell, which is located between endoplasmic reticulum and the Golgi complex. Interacts with Nucleoprotein. Interacts with host IRF3; this interaction inhibits type I IFN production.

It localises to the host Golgi apparatus membrane. Its subcellular location is the host endoplasmic reticulum. Plays a central role in virus morphogenesis and assembly. Acts as a viroporin and self-assembles in host membranes forming pentameric protein-lipid pores that allow ion transport. Also plays a role in the induction of apoptosis. Counteracts the production of type I interferon by interacting with host IRF3 component and preventing its translocation to the host nucleus. The chain is Envelope small membrane protein from Sus scrofa (Pig).